Here is a 287-residue protein sequence, read N- to C-terminus: Protease HtpX (287 aa).

Helical transmembrane passes span 4 to 24 (ILLF…VLNI) and 36 to 56 (LSGL…ISLL). A Zn(2+)-binding site is contributed by histidine 143. Glutamate 144 is a catalytic residue. Residue histidine 147 coordinates Zn(2+). 2 helical membrane passes run 158 to 178 (LMQG…ANIV) and 192 to 212 (MVYF…ASFI). Glutamate 221 is a binding site for Zn(2+).

This sequence belongs to the peptidase M48B family. It depends on Zn(2+) as a cofactor.

The protein localises to the cell inner membrane. The chain is Protease HtpX from Vibrio cholerae serotype O1 (strain ATCC 39315 / El Tor Inaba N16961).